The primary structure comprises 463 residues: MTLGQFGGLFVVYLISVIFILSLTWMEFRRVRFNFNVLFSLLYLLTFYFGFPFTCVLVFRFGVDVVPVQFLLQAMLSATAFYAIYYVSYKTRLRQKTSVPRAPLLTVNRVEANLTWLLLALIAVATVGIFFLNNGFLLFKLRSYSQIFSSDVSGVALKRFFYFFIPAMLVVYFLRQTQRAWLMFLIGTVAFGMLTYVIVGGTRANLIIAFALFLFIGIVRGWITLWMLVAAGAFGIVGMFWLALKRYGLDVSGDYAFYTFLYLTRDTFSPWENLALLWQNYDKIEFQGLAPIARDFYVFIPSWLWPDRPNLVLNSANYFTWEVLNNHSGLAISPTLLGSLVVMGGVLFIPLGAIAVGLVIKWFDWVYELGKNDSNRYKAAILQAFCFGAVFNIIVLTREGVDSFVSRVVFFCLVFGLCLLVAKLLYWLLESAGLIRQRLMRMRATPLVPTPNTVPDPVIKEQL.

A run of 11 helical transmembrane segments spans residues 6–26 (FGGLFVVYLISVIFILSLTWM), 39–59 (FSLLYLLTFYFGFPFTCVLVF), 65–85 (VVPVQFLLQAMLSATAFYAIY), 112–132 (ANLTWLLLALIAVATVGIFFL), 154–174 (GVALKRFFYFFIPAMLVVYFL), 180–200 (AWLMFLIGTVAFGMLTYVIVG), 201–221 (GTRANLIIAFALFLFIGIVRG), 222–242 (WITLWMLVAAGAFGIVGMFWL), 340–360 (LVVMGGVLFIPLGAIAVGLVI), 377–397 (YKAAILQAFCFGAVFNIIVLT), and 408–428 (VVFFCLVFGLCLLVAKLLYWL).

This sequence belongs to the WzyE family. Probably part of a complex composed of WzxE, WzyE and WzzE.

Its subcellular location is the cell inner membrane. Its pathway is bacterial outer membrane biogenesis; enterobacterial common antigen biosynthesis. In terms of biological role, probably involved in the polymerization of enterobacterial common antigen (ECA) trisaccharide repeat units. This Pectobacterium carotovorum subsp. carotovorum (strain PC1) protein is Probable ECA polymerase.